The chain runs to 181 residues: Neuroblastoma suppressor of tumorigenicity 1 (181 aa).

The signal sequence occupies residues 1–16 (MMLRVLVGAVLPAMLL). 5 disulfide bridges follow: Cys-35–Cys-85, Cys-49–Cys-99, Cys-59–Cys-118, Cys-63–Cys-120, and Cys-82–Cys-123. The 90-residue stretch at 35–124 (CEAKNITQIV…ILHCSCQACG (90 aa)) folds into the CTCK domain. A disordered region spans residues 132–181 (LSVYVQGEDGPGSQPGTHPHPHPHPHPGGQTPEPEDPPGAPHTEEEGAED).

Belongs to the DAN family. As to quaternary structure, homodimer. As to expression, most abundant in normal lung and meningioma.

It localises to the secreted. Its function is as follows. Possible candidate as a tumor suppressor gene of neuroblastoma. May play an important role in preventing cells from entering the final stage (G1/S) of the transformation process. The chain is Neuroblastoma suppressor of tumorigenicity 1 (NBL1) from Homo sapiens (Human).